Reading from the N-terminus, the 1113-residue chain is MPRPELPLPEGWEEARDFDGKVYYIDHTNRTTSWIDPRDRYTKPLTFADCISDELPLGWEEAYDPQVGDYFIDHNTKTTQIEDPRVQWRREQEHMLKDYLVVAQEALSAQKEIYQVKQQRLELAQQEYQQLHAVWEHKLGSQVSLVSGSSSSSKYDPEILKAEIATAKSRVNKLKREMVHLQHELQFKERGFQTLKKIDKKMSDAQGSYKLDEAQAVLRETKAIKKAITCGEKEKQDLIKSLAMLKDGFRTDRGSHSDLWSSSSSLESSSFPLPKQYLDVSSQTDISGSFGINSNNQLAEKVRLRLRYEEAKRRIANLKIQLAKLDSEAWPGVLDSERDRLILINEKEELLKEMRFISPRKWTQGEVEQLEMARKRLEKDLQAARDTQSKALTERLKLNSKRNQLVRELEEATRQVATLHSQLKSLSSSMQSLSSGSSPGSLTSSRGSLVASSLDSSTSASFTDLYYDPFEQLDSELQSKVEFLLLEGATGFRPSGCITTIHEDEVAKTQKAEGGGRLQALRSLSGTPKSMTSLSPRSSLSSPSPPCSPLMADPLLAGDAFLNSLEFEDPELSATLCELSLGNSAQERYRLEEPGTEGKQLGQAVNTAQGCGLKVACVSAAVSDESVAGDSGVYEASVQRLGASEAAAFDSDESEAVGATRIQIALKYDEKNKQFAILIIQLSNLSALLQQQDQKVNIRVAVLPCSESTTCLFRTRPLDASDTLVFNEVFWVSMSYPALHQKTLRVDVCTTDRSHLEECLGGAQISLAEVCRSGERSTRWYNLLSYKYLKKQSRELKPVGVMAPASGPASTDAVSALLEQTAVELEKRQEGRSSTQTLEDSWRYEETSENEAVAEEEEEEVEEEEGEEDVFTEKASPDMDGYPALKVDKETNTETPAPSPTVVRPKDRRVGTPSQGPFLRGSTIIRSKTFSPGPQSQYVCRLNRSDSDSSTLSKKPPFVRNSLERRSVRMKRPSSVKSLRSERLIRTSLDLELDLQATRTWHSQLTQEISVLKELKEQLEQAKSHGEKELPQWLREDERFRLLLRMLEKRQMDRAEHKGELQTDKMMRAAAKDVHRLRGQSCKEPPEVQSFREKMAFFTRPRMNIPALSADDV.

WW domains follow at residues 6 to 39 (LPLP…DPRD) and 53 to 86 (DELP…DPRV). Coiled coils occupy residues 107–193 (LSAQ…RGFQ) and 293–431 (NSNN…SSMQ). Residue S141 is modified to Phosphoserine. 2 disordered regions span residues 429–448 (SMQS…SRGS) and 522–547 (RSLS…SPPC). A compositionally biased stretch (polar residues) spans 522–532 (RSLSGTPKSMT). The segment covering 533–542 (SLSPRSSLSS) has biased composition (low complexity). The residue at position 535 (S535) is a Phosphoserine. Position 542 is a phosphoserine; by CDK1 (S542). One can recognise a C2 domain in the interval 658–781 (GATRIQIALK…RSGERSTRWY (124 aa)). Residues 825-975 (LEKRQEGRSS…RSVRMKRPSS (151 aa)) are disordered. The interval 839–1113 (EDSWRYEETS…NIPALSADDV (275 aa)) is interaction with histone H3. Positions 847 to 870 (TSENEAVAEEEEEEVEEEEGEEDV) are enriched in acidic residues. At S899 the chain carries Phosphoserine. At T912 the chain carries Phosphothreonine. Positions 924–938 (IIRSKTFSPGPQSQY) are enriched in polar residues. S927 is modified (phosphoserine). T929 bears the Phosphothreonine mark. S931 is modified (phosphoserine; by CDK1). Phosphoserine is present on S947. Interaction with PRKCZ regions lie at residues 953–996 (SKKP…LDLQ) and 956–975 (PPFV…RPSS). A phosphoserine; by PKC/PRKCZ mark is found at S975 and S978. Residues 1001–1032 (WHSQLTQEISVLKELKEQLEQAKSHGEKELPQ) are a coiled coil. The ADDV motif motif lies at 1111–1113 (DDV).

It belongs to the WWC family. KIBRA subfamily. Homodimer. Forms heterodimers with WWC2 and WWC3. Interacts with DDN. Interacts with DYNLL1 and histone H3. The interaction with DYNLL1 is mandatory for the recruitment and transactivation functions of ESR1 or DYNLL1 to the target chromatin and the interaction with histone H3 ensures proper regulatory interaction of WWC1-DYNLL1-ESR1 complexes with target chromatin. Interacts (via WW domains) with DDR1 (via PPxY motif) in a collagen-regulated manner. Interacts with PRKCZ (via the protein kinase domain). Forms a tripartite complex with DDR1 and PRKCZ, but predominantly in the absence of collagen. Interacts (via the ADDV motif) with PATJ (via PDZ domain 8). Interacts (via WW domains) with SYNPO (via PPxY motifs). Interacts with NF2 and SNX4. Interacts with DLC1 and PRKCZ. Interacts (via WW domains) with LATS1 and LATS2. Post-translationally, phosphorylation at Ser-542 and Ser-931 by CDK1 in response to spindle damage stress regulates mitotic exit, these two sites are dephosphorylated by CDC14B. Expressed in mammary epithelial cells and breast cancer cell lines. Found in the luminal epithelium surrounding the ducts in the normal breast. In the brain, expressed in somatodendritic compartment of neurons in the cortex and hippocampus and in the cerebellum it is found in the Purkinje cells and some granule cells (at protein level). Detected in brain, heart, colon and kidney. In the kidney, expressed in glomerular podocytes, in some tubules and in the collecting duct.

It is found in the cytoplasm. The protein resides in the perinuclear region. Its subcellular location is the nucleus. It localises to the cell projection. The protein localises to the ruffle membrane. It is found in the cytosol. In terms of biological role, regulator of the Hippo signaling pathway, also known as the Salvador-Warts-Hippo (SWH) pathway. Enhances phosphorylation of LATS1 and YAP1 and negatively regulates cell proliferation and organ growth due to a suppression of the transcriptional activity of YAP1, the major effector of the Hippo pathway. Along with NF2 can synergistically induce the phosphorylation of LATS1 and LATS2 and function in the regulation of Hippo signaling pathway. Acts as a transcriptional coactivator of ESR1 which plays an essential role in DYNLL1-mediated ESR1 transactivation. Regulates collagen-stimulated activation of the ERK/MAPK cascade. Modulates directional migration of podocytes. Plays a role in cognition and memory performance. Plays an important role in regulating AMPA-selective glutamate receptors (AMPARs) trafficking underlying synaptic plasticity and learning. The sequence is that of Protein KIBRA from Homo sapiens (Human).